A 431-amino-acid chain; its full sequence is 3-phosphoshikimate 1-carboxyvinyltransferase (431 aa).

3-phosphoshikimate contacts are provided by Lys22, Ser23, and Arg27. A phosphoenolpyruvate-binding site is contributed by Lys22. 2 residues coordinate phosphoenolpyruvate: Gly94 and Arg122. 4 residues coordinate 3-phosphoshikimate: Ser167, Gln169, Asp315, and Lys342. Residue Gln169 coordinates phosphoenolpyruvate. The active-site Proton acceptor is Asp315. 2 residues coordinate phosphoenolpyruvate: Arg346 and Arg388.

This sequence belongs to the EPSP synthase family. Monomer.

The protein resides in the cytoplasm. The catalysed reaction is 3-phosphoshikimate + phosphoenolpyruvate = 5-O-(1-carboxyvinyl)-3-phosphoshikimate + phosphate. It functions in the pathway metabolic intermediate biosynthesis; chorismate biosynthesis; chorismate from D-erythrose 4-phosphate and phosphoenolpyruvate: step 6/7. Its function is as follows. Catalyzes the transfer of the enolpyruvyl moiety of phosphoenolpyruvate (PEP) to the 5-hydroxyl of shikimate-3-phosphate (S3P) to produce enolpyruvyl shikimate-3-phosphate and inorganic phosphate. The protein is 3-phosphoshikimate 1-carboxyvinyltransferase of Pelobacter propionicus (strain DSM 2379 / NBRC 103807 / OttBd1).